Here is a 91-residue protein sequence, read N- to C-terminus: LYR motif-containing protein 4 (91 aa).

Residues arginine 6 and lysine 44 each contribute to the pantetheine 4'-phosphate site. Position 47 is an N6-succinyllysine (lysine 47).

It belongs to the complex I LYR family. Homodimer. Component of the mitochondrial core iron-sulfur cluster (ISC) complex composed of NFS1, LYRM4, NDUFAB1, ISCU, FXN, and FDX2; this complex is a heterohexamer containing two copies of each monomer. Component of the cyteine desulfurase complex composed of NFS1, LYRM4 and NDUFAB1; this complex contributes to the stability and cysteine desulfurase activity of NFS1. Interacts with FXN; this interaction is nickel-dependent. Interacts with the cytoplasmic form of NFS1; the complex increases the stability of NFS1. Forms a complex with the cytoplasmic form of NFS1; this complex increases the stability and cysteine desulfurase activity of NFS1. Interacts with NFS1.

It is found in the mitochondrion. It localises to the nucleus. It participates in cofactor biosynthesis; iron-sulfur cluster biosynthesis. Functionally, stabilizing factor, of the core iron-sulfur cluster (ISC) assembly complex, that regulates, in association with NDUFAB1, the stability and the cysteine desulfurase activity of NFS1 and participates in the [2Fe-2S] clusters assembly on the scaffolding protein ISCU. The core iron-sulfur cluster (ISC) assembly complex is involved in the de novo synthesis of a [2Fe-2S] cluster, the first step of the mitochondrial iron-sulfur protein biogenesis. This process is initiated by the cysteine desulfurase complex (NFS1:LYRM4:NDUFAB1) that produces persulfide which is delivered on the scaffold protein ISCU in a FXN-dependent manner. Then this complex is stabilized by FDX2 which provides reducing equivalents to accomplish the [2Fe-2S] cluster assembly. Finally, the [2Fe-2S] cluster is transferred from ISCU to chaperone proteins, including HSCB, HSPA9 and GLRX5. May also participates in the iron-sulfur protein biogenesis in the cytoplasm through its interaction with the cytoplasmic form of NFS1. The chain is LYR motif-containing protein 4 from Bos taurus (Bovine).